We begin with the raw amino-acid sequence, 535 residues long: Probable anion transporter 2, chloroplastic (535 aa).

A chloroplast-targeting transit peptide spans 1–95 (MASIRSCVSV…RERAVAAMCS (95 aa)). The next 12 membrane-spanning stretches (helical) occupy residues 125 to 145 (VVAL…VMSV), 160 to 180 (FLGI…MVGG), 191 to 211 (VMAG…WAAS), 215 to 235 (IMLL…FPTM), 254 to 274 (ISMG…PIIM), 279 to 299 (LAGT…VWLF), 343 to 363 (IEMW…FVLL), 381 to 401 (AAWF…VAGA), 413 to 433 (VALV…VSLL), 443 to 463 (VAAV…AGYF), 483 to 503 (GIGT…VQWL), and 504 to 524 (GSFQ…TVFY).

It belongs to the major facilitator superfamily. Sodium/anion cotransporter (TC 2.A.1.14) family.

The protein resides in the plastid. The protein localises to the chloroplast membrane. Probable anion transporter. In Oryza sativa subsp. japonica (Rice), this protein is Probable anion transporter 2, chloroplastic (PHT4;2).